The chain runs to 512 residues: Norfluorocurarine oxidase (512 aa).

Residues 3 to 23 (LLLNPSLFSLLPLLLFIIFLF) traverse the membrane as a helical segment. C453 contributes to the heme binding site.

Belongs to the cytochrome P450 family. Heme serves as cofactor.

The protein resides in the membrane. The enzyme catalyses norfluorocurarine + reduced [NADPH--hemoprotein reductase] + O2 = 18-hydroxynorfluorocurarine + oxidized [NADPH--hemoprotein reductase] + H2O + H(+). Its pathway is alkaloid biosynthesis. Functionally, monooxygenase involved in the biosynthesis of curare monoterpene indole alkaloids (MIAs), natural products such as diaboline, a pharmacologically active compound used to regulate blood pressure. Curare alkaloids act as animal glycine receptor antagonists. Catalyzes the conversion of norfluorocurarine to 18-OH norfluorocurarine. The protein is Norfluorocurarine oxidase of Strychnos sp.